A 307-amino-acid polypeptide reads, in one-letter code: Homoserine kinase (307 aa).

P85–A95 serves as a coordination point for ATP.

This sequence belongs to the GHMP kinase family. Homoserine kinase subfamily.

The protein resides in the cytoplasm. It carries out the reaction L-homoserine + ATP = O-phospho-L-homoserine + ADP + H(+). It participates in amino-acid biosynthesis; L-threonine biosynthesis; L-threonine from L-aspartate: step 4/5. Its function is as follows. Catalyzes the ATP-dependent phosphorylation of L-homoserine to L-homoserine phosphate. The protein is Homoserine kinase of Caldicellulosiruptor bescii (strain ATCC BAA-1888 / DSM 6725 / KCTC 15123 / Z-1320) (Anaerocellum thermophilum).